The sequence spans 158 residues: 3-hydroxyacyl-[acyl-carrier-protein] dehydratase FabZ (158 aa).

Residue His62 is part of the active site.

This sequence belongs to the thioester dehydratase family. FabZ subfamily.

It localises to the cytoplasm. It carries out the reaction a (3R)-hydroxyacyl-[ACP] = a (2E)-enoyl-[ACP] + H2O. Its function is as follows. Involved in unsaturated fatty acids biosynthesis. Catalyzes the dehydration of short chain beta-hydroxyacyl-ACPs and long chain saturated and unsaturated beta-hydroxyacyl-ACPs. The chain is 3-hydroxyacyl-[acyl-carrier-protein] dehydratase FabZ from Novosphingobium aromaticivorans (strain ATCC 700278 / DSM 12444 / CCUG 56034 / CIP 105152 / NBRC 16084 / F199).